The sequence spans 625 residues: tRNA uridine 5-carboxymethylaminomethyl modification enzyme MnmG (625 aa).

14-19 (GAGHAG) serves as a coordination point for FAD. Residue 273-287 (GPRYCPSIEDKIVRF) coordinates NAD(+).

It belongs to the MnmG family. As to quaternary structure, homodimer. Heterotetramer of two MnmE and two MnmG subunits. It depends on FAD as a cofactor.

Its subcellular location is the cytoplasm. In terms of biological role, NAD-binding protein involved in the addition of a carboxymethylaminomethyl (cmnm) group at the wobble position (U34) of certain tRNAs, forming tRNA-cmnm(5)s(2)U34. The sequence is that of tRNA uridine 5-carboxymethylaminomethyl modification enzyme MnmG from Clostridium botulinum (strain Loch Maree / Type A3).